The primary structure comprises 193 residues: MTRLVLASGSRWRRQLLDRLELPYAWAAPDIDETPHPRESPQALVHRLALGKATALAGEYPDHLIIGSDQVCLFDDQILGKPGDAATARANLQRFSGQRVRFLTGIAVIDTAHARHWVDHERYDVIFRDLSETEIAHYVDREQPLDSAGSFRMEGLGITLFERLEGRDPNTLIGLPLIRLCEMLREAGLDPLG.

Residue aspartate 69 is the Proton acceptor of the active site.

It belongs to the Maf family. YceF subfamily. A divalent metal cation is required as a cofactor.

It is found in the cytoplasm. The enzyme catalyses N(7)-methyl-GTP + H2O = N(7)-methyl-GMP + diphosphate + H(+). Functionally, nucleoside triphosphate pyrophosphatase that hydrolyzes 7-methyl-GTP (m(7)GTP). May have a dual role in cell division arrest and in preventing the incorporation of modified nucleotides into cellular nucleic acids. In Chromohalobacter salexigens (strain ATCC BAA-138 / DSM 3043 / CIP 106854 / NCIMB 13768 / 1H11), this protein is 7-methyl-GTP pyrophosphatase.